The sequence spans 401 residues: Argininosuccinate synthase (401 aa).

Residues 8–16 and Ala-35 each bind ATP; that span reads AYSGGLDTS. Residues Tyr-86 and Ser-91 each contribute to the L-citrulline site. Residue Gly-116 participates in ATP binding. Residues Thr-118, Asn-122, and Asp-123 each contribute to the L-aspartate site. Position 122 (Asn-122) interacts with L-citrulline. 5 residues coordinate L-citrulline: Arg-126, Ser-175, Ser-184, Glu-260, and Tyr-272.

It belongs to the argininosuccinate synthase family. Type 1 subfamily. Homotetramer.

Its subcellular location is the cytoplasm. The catalysed reaction is L-citrulline + L-aspartate + ATP = 2-(N(omega)-L-arginino)succinate + AMP + diphosphate + H(+). Its pathway is amino-acid biosynthesis; L-arginine biosynthesis; L-arginine from L-ornithine and carbamoyl phosphate: step 2/3. The sequence is that of Argininosuccinate synthase from Carboxydothermus hydrogenoformans (strain ATCC BAA-161 / DSM 6008 / Z-2901).